The following is a 396-amino-acid chain: Elongation factor Tu-B (396 aa).

The tr-type G domain occupies 10 to 206 (KLHVNVGTIG…ALDTFIPDPT (197 aa)). A G1 region spans residues 19-26 (GHVDHGKT). 19–26 (GHVDHGKT) contributes to the GTP binding site. Threonine 26 contacts Mg(2+). The interval 60–64 (GITIS) is G2. Residues 81–84 (DCPG) are G3. Residues 81–85 (DCPGH) and 136–139 (NKAD) contribute to the GTP site. The interval 136–139 (NKAD) is G4. The tract at residues 174–176 (SAR) is G5.

It belongs to the TRAFAC class translation factor GTPase superfamily. Classic translation factor GTPase family. EF-Tu/EF-1A subfamily. Monomer.

It is found in the cytoplasm. It carries out the reaction GTP + H2O = GDP + phosphate + H(+). Functionally, GTP hydrolase that promotes the GTP-dependent binding of aminoacyl-tRNA to the A-site of ribosomes during protein biosynthesis. The protein is Elongation factor Tu-B of Xanthomonas campestris pv. campestris (strain ATCC 33913 / DSM 3586 / NCPPB 528 / LMG 568 / P 25).